The chain runs to 40 residues: Cytochrome c3 hydrogenase small chain (40 aa).

The cofactor is Fe cation.

It carries out the reaction 2 Fe(III)-[cytochrome c3] + H2 = 2 Fe(II)-[cytochrome c3] + 2 H(+). This chain is Cytochrome c3 hydrogenase small chain (hoxK), found in Acidithiobacillus ferrooxidans (Thiobacillus ferrooxidans).